Here is a 384-residue protein sequence, read N- to C-terminus: S-adenosylmethionine synthase (384 aa).

Residue H15 participates in ATP binding. D17 serves as a coordination point for Mg(2+). E43 is a K(+) binding site. 2 residues coordinate L-methionine: E56 and Q99. A flexible loop region spans residues 99 to 109; the sequence is QSPDINQGVDR. ATP contacts are provided by residues 164 to 166, 230 to 231, D239, 245 to 246, A262, and K266; these read DAK, RF, and RK. D239 is an L-methionine binding site. K270 serves as a coordination point for L-methionine.

The protein belongs to the AdoMet synthase family. Homotetramer; dimer of dimers. It depends on Mg(2+) as a cofactor. K(+) is required as a cofactor.

It localises to the cytoplasm. It carries out the reaction L-methionine + ATP + H2O = S-adenosyl-L-methionine + phosphate + diphosphate. It functions in the pathway amino-acid biosynthesis; S-adenosyl-L-methionine biosynthesis; S-adenosyl-L-methionine from L-methionine: step 1/1. Its function is as follows. Catalyzes the formation of S-adenosylmethionine (AdoMet) from methionine and ATP. The overall synthetic reaction is composed of two sequential steps, AdoMet formation and the subsequent tripolyphosphate hydrolysis which occurs prior to release of AdoMet from the enzyme. The sequence is that of S-adenosylmethionine synthase from Klebsiella pneumoniae subsp. pneumoniae (strain ATCC 700721 / MGH 78578).